Here is a 154-residue protein sequence, read N- to C-terminus: Aspartate carbamoyltransferase regulatory chain (154 aa).

Positions 109, 114, 138, and 141 each coordinate Zn(2+).

It belongs to the PyrI family. Contains catalytic and regulatory chains. Zn(2+) serves as cofactor.

Its function is as follows. Involved in allosteric regulation of aspartate carbamoyltransferase. This Yersinia enterocolitica serotype O:8 / biotype 1B (strain NCTC 13174 / 8081) protein is Aspartate carbamoyltransferase regulatory chain.